The following is a 441-amino-acid chain: Maltokinase (441 aa).

The protein belongs to the aminoglycoside phosphotransferase family. As to quaternary structure, monomer.

The catalysed reaction is D-maltose + ATP = alpha-maltose 1-phosphate + ADP + H(+). It functions in the pathway glycan biosynthesis; glycogen biosynthesis. In terms of biological role, catalyzes the ATP-dependent phosphorylation of maltose to maltose 1-phosphate. Is involved in a branched alpha-glucan biosynthetic pathway from trehalose, together with TreS, GlgE and GlgB. The sequence is that of Maltokinase (mak) from Mycolicibacterium vanbaalenii (strain DSM 7251 / JCM 13017 / BCRC 16820 / KCTC 9966 / NRRL B-24157 / PYR-1) (Mycobacterium vanbaalenii).